The sequence spans 309 residues: MVNGVLLLHKPVGMTSHDCVMKIRKLLKTKKVGHTGTLDPEVSGVLPICVGRATKIVEYVTDKSKTYDAEITLGFSTSTEDQTGETVSVKPVKEPLKEADIKAVLDELKGPQEQVPPMYSAVKVNGKKLYEYARAGIEVERPKRNITIEDIALTSPVTYNEDTASFRFTVTCSKGTYVRTLAVTIGEKLGYPAHMSHLIRTASGDFSLDECFTFEELEQQVSDGTVAEHAVPIDRALNHLPKWVISDTLAKKAENGSVFDIPAEFSAMTADARIAVCTEDGECVAIYMPHPSKKGLLKPAKVLMQKSEQ.

The active-site Nucleophile is the Asp-39.

It belongs to the pseudouridine synthase TruB family. Type 1 subfamily.

The catalysed reaction is uridine(55) in tRNA = pseudouridine(55) in tRNA. Responsible for synthesis of pseudouridine from uracil-55 in the psi GC loop of transfer RNAs. The polypeptide is tRNA pseudouridine synthase B (Bacillus velezensis (strain DSM 23117 / BGSC 10A6 / LMG 26770 / FZB42) (Bacillus amyloliquefaciens subsp. plantarum)).